The sequence spans 447 residues: Cytochrome P450 monooxygenase aunB (447 aa).

Residue Cys386 participates in heme binding.

Belongs to the cytochrome P450 family. The cofactor is heme.

It carries out the reaction 2 fonsecin B + NADPH + O2 + H(+) = aurasperone B + NADP(+) + 2 H2O. The catalysed reaction is 2 rubrofusarin B + NADPH + O2 + H(+) = aurasperone A + NADP(+) + 2 H2O. The protein operates within secondary metabolite biosynthesis. Cytochrome P450 monooxygenase; part of the gene cluster that mediates the biosynthesis of aurasperone B, a dimeric gamma-naphthopyrone. The first step in the biosynthesis of aurasperone B is the production of gamma-naphthopyrone precursor YWA1 by the non-reducing polyketide synthase albA, via condensation of one acetyl-CoA starter unit with 6 malonyl-CoA units. YWA1 is then methylated by aunE at position C-6 to yield foncesin which is further methylated at position C-8 by aunD to produce fonsecin B. A key enzyme in the biosynthetic pathway is the cytochrome P450 monooxygenase aunB which catalyzes the oxidative dimerization of fonsecin B to aurasperone B. AunB also catalyzes the oxidative dimerization of rubrofusarin B into aurasperone A. This Aspergillus niger (strain ATCC MYA-4892 / CBS 513.88 / FGSC A1513) protein is Cytochrome P450 monooxygenase aunB.